The following is a 324-amino-acid chain: Ribose-phosphate pyrophosphokinase (324 aa).

Residues 45–47 and 104–105 contribute to the ATP site; these read NGE and RQ. Mg(2+)-binding residues include H138 and D178. K201 is an active-site residue. Residues R203, D229, and 233–237 each bind D-ribose 5-phosphate; that span reads DTGGT.

This sequence belongs to the ribose-phosphate pyrophosphokinase family. Class I subfamily. As to quaternary structure, homohexamer. Requires Mg(2+) as cofactor.

Its subcellular location is the cytoplasm. The enzyme catalyses D-ribose 5-phosphate + ATP = 5-phospho-alpha-D-ribose 1-diphosphate + AMP + H(+). Its pathway is metabolic intermediate biosynthesis; 5-phospho-alpha-D-ribose 1-diphosphate biosynthesis; 5-phospho-alpha-D-ribose 1-diphosphate from D-ribose 5-phosphate (route I): step 1/1. Its function is as follows. Involved in the biosynthesis of the central metabolite phospho-alpha-D-ribosyl-1-pyrophosphate (PRPP) via the transfer of pyrophosphoryl group from ATP to 1-hydroxyl of ribose-5-phosphate (Rib-5-P). The chain is Ribose-phosphate pyrophosphokinase from Streptomyces coelicolor (strain ATCC BAA-471 / A3(2) / M145).